The following is a 201-amino-acid chain: Fimbrial protein FimX (201 aa).

The N-terminal stretch at 1–21 (MQAKTFLLGAALAGVALAAHA) is a signal peptide. Cys-37 and Cys-79 are joined by a disulfide.

The protein belongs to the fimbrial protein family.

Its subcellular location is the fimbrium. In terms of biological role, bordetella pertussis is the causative agent of whooping cough. An essential step in the disease process is the attachment of the bacteria to the ciliated epithelium of the respiratory tract, enabling the organism to resist normal host-clearance mechanisms. It is unclear which bacterial cell surface component are responsible for adherence but the fimbriae of B.pertussis are prime candidates for being involved in this process. This chain is Fimbrial protein FimX (fimX), found in Bordetella pertussis (strain Tohama I / ATCC BAA-589 / NCTC 13251).